Here is a 475-residue protein sequence, read N- to C-terminus: Aspartyl/glutamyl-tRNA(Asn/Gln) amidotransferase subunit B (475 aa).

This sequence belongs to the GatB/GatE family. GatB subfamily. As to quaternary structure, heterotrimer of A, B and C subunits.

The enzyme catalyses L-glutamyl-tRNA(Gln) + L-glutamine + ATP + H2O = L-glutaminyl-tRNA(Gln) + L-glutamate + ADP + phosphate + H(+). It carries out the reaction L-aspartyl-tRNA(Asn) + L-glutamine + ATP + H2O = L-asparaginyl-tRNA(Asn) + L-glutamate + ADP + phosphate + 2 H(+). Allows the formation of correctly charged Asn-tRNA(Asn) or Gln-tRNA(Gln) through the transamidation of misacylated Asp-tRNA(Asn) or Glu-tRNA(Gln) in organisms which lack either or both of asparaginyl-tRNA or glutaminyl-tRNA synthetases. The reaction takes place in the presence of glutamine and ATP through an activated phospho-Asp-tRNA(Asn) or phospho-Glu-tRNA(Gln). This chain is Aspartyl/glutamyl-tRNA(Asn/Gln) amidotransferase subunit B, found in Bacillus cereus (strain ATCC 10987 / NRS 248).